The following is a 389-amino-acid chain: Chalcone synthase 2 (389 aa).

Residue Cys164 is part of the active site.

Belongs to the thiolase-like superfamily. Chalcone/stilbene synthases family.

The enzyme catalyses (E)-4-coumaroyl-CoA + 3 malonyl-CoA + 3 H(+) = 2',4,4',6'-tetrahydroxychalcone + 3 CO2 + 4 CoA. Its pathway is secondary metabolite biosynthesis; flavonoid biosynthesis. Functionally, the primary product of this enzyme is 4,2',4',6'-tetrahydroxychalcone (also termed naringenin-chalcone or chalcone) which can under specific conditions spontaneously isomerize into naringenin. In Trifolium subterraneum (Subterranean clover), this protein is Chalcone synthase 2 (CHS2).